Consider the following 324-residue polypeptide: Ribose 1,5-bisphosphate isomerase (324 aa).

Substrate is bound by residues 22–25 (RGAG) and R65. The active-site Proton acceptor is C135. 137 to 139 (SKA) contributes to the substrate binding site. The active-site Proton donor is the D204. Residues 214 to 215 (NK) and K240 each bind substrate.

It belongs to the eIF-2B alpha/beta/delta subunits family. R15P isomerase subfamily.

The enzyme catalyses alpha-D-ribose 1,5-bisphosphate = D-ribulose 1,5-bisphosphate. Its function is as follows. Catalyzes the isomerization of ribose 1,5-bisphosphate (R15P) to ribulose 1,5-bisphosphate (RuBP), the CO(2) acceptor and substrate for RubisCO. Functions in an archaeal AMP degradation pathway, together with AMP phosphorylase and RubisCO. The chain is Ribose 1,5-bisphosphate isomerase from Pyrococcus horikoshii (strain ATCC 700860 / DSM 12428 / JCM 9974 / NBRC 100139 / OT-3).